The following is a 200-amino-acid chain: Phospholipase A2 inhibitor CgMIP-I (200 aa).

An N-terminal signal peptide occupies residues 1–19 (MKYLHTICLLFIFVARGNS). Cystine bridges form between cysteine 22–cysteine 46, cysteine 25–cysteine 32, cysteine 39–cysteine 67, cysteine 73–cysteine 94, cysteine 95–cysteine 100, cysteine 118–cysteine 143, and cysteine 136–cysteine 165. Asparagine 176 carries N-linked (GlcNAc...) asparagine glycosylation.

It belongs to the CNF-like-inhibitor family. As to quaternary structure, homomer of 110 kDa composed of 20-25-kDa subunits. N-glycosylated. The glycosidic chain may contain superficial sialic acid residues. In terms of tissue distribution, expressed by the liver.

It is found in the secreted. Functionally, inhibits the enzymatic activity of basic phospholipase A2. Specifically neutralizes PLA2, myotoxic, edema-forming, cytolytic, and anti-coagulant activities, as well as intracerebral lethal effect of the basic myotoxin I from the same venom (AC P0DQP6), crotoxin heterodimer and crotoxin subunit B alone. Does not block the enzymatic activity of crude acidic PLA2 fractions from the same venom. The sequence is that of Phospholipase A2 inhibitor CgMIP-I from Cerrophidion godmani (Porthidium godmani).